The sequence spans 89 residues: Small ribosomal subunit protein uS15 (89 aa).

Belongs to the universal ribosomal protein uS15 family. In terms of assembly, part of the 30S ribosomal subunit. Forms a bridge to the 50S subunit in the 70S ribosome, contacting the 23S rRNA.

Its function is as follows. One of the primary rRNA binding proteins, it binds directly to 16S rRNA where it helps nucleate assembly of the platform of the 30S subunit by binding and bridging several RNA helices of the 16S rRNA. Forms an intersubunit bridge (bridge B4) with the 23S rRNA of the 50S subunit in the ribosome. This is Small ribosomal subunit protein uS15 from Magnetococcus marinus (strain ATCC BAA-1437 / JCM 17883 / MC-1).